Here is a 301-residue protein sequence, read N- to C-terminus: GTPase Era (301 aa).

The 170-residue stretch at 4–173 (KAGFVALIGK…LECISKHLSP (170 aa)) folds into the Era-type G domain. A G1 region spans residues 12-19 (GKPNAGKS). 12-19 (GKPNAGKS) provides a ligand contact to GTP. The tract at residues 38-42 (NATRK) is G2. The tract at residues 64–67 (DTPG) is G3. GTP is bound by residues 64–68 (DTPGL) and 122–125 (SKID). The interval 122 to 125 (SKID) is G4. Residues 152-154 (LSA) are G5. In terms of domain architecture, KH type-2 spans 204-280 (LSDEIPYESD…FLNLQVIAQK (77 aa)).

The protein belongs to the TRAFAC class TrmE-Era-EngA-EngB-Septin-like GTPase superfamily. Era GTPase family. In terms of assembly, monomer.

It is found in the cytoplasm. Its subcellular location is the cell inner membrane. Its function is as follows. An essential GTPase that binds both GDP and GTP, with rapid nucleotide exchange. Plays a role in 16S rRNA processing and 30S ribosomal subunit biogenesis and possibly also in cell cycle regulation and energy metabolism. This is GTPase Era from Helicobacter pylori (strain Shi470).